Consider the following 369-residue polypeptide: Protein VP6 (369 aa).

Disordered regions lie at residues 17–169 (KREL…LQGR) and 184–208 (LDRI…GGDR). The span at 29 to 68 (LREKGSTEAKSKLKEDGEKKNKSEKEENKIHDDRRVESQK) shows a compositional bias: basic and acidic residues. The span at 92–111 (TGGGDGSAGARTGIGGGGVG) shows a compositional bias: gly residues. Composition is skewed to basic and acidic residues over residues 137 to 148 (TGADRVANDDAT) and 196 to 208 (TEGE…GGDR).

It belongs to the orbivirus VP6 family.

The protein resides in the virion. This is Protein VP6 (Segment-9) from African horse sickness virus (AHSV).